Here is a 107-residue protein sequence, read N- to C-terminus: 4-carboxymethyl-4-methylbutenolide mutase (107 aa).

His26 functions as the Proton donor/acceptor in the catalytic mechanism. The 3-methylmuconolactone site is built by His26 and Tyr39. 4-methylmuconolactone is bound by residues His26 and Tyr39.

It belongs to the MmlI family. As to quaternary structure, homodimer.

The catalysed reaction is 4-methylmuconolactone = 3-methylmuconolactone. Inhibited by p-chloromercuribenzoate. Its function is as follows. Isomerase involved in the degradation of 4-methylsalicylate and 5-methylsalicylate. Catalyzes the isomerization of the dead-end metabolite 4-methylmuconolactone (4-ML) to 3-methylmuconolactone (3-ML), which can then be further degraded through a modified 3-oxoadipate pathway. Can also use 1-methylbislactone but not 3-methyl-cis,cis-muconate. The protein is 4-carboxymethyl-4-methylbutenolide mutase of Pseudomonas reinekei.